The following is a 193-amino-acid chain: Ion-translocating oxidoreductase complex subunit A (193 aa).

A run of 6 helical transmembrane segments spans residues 5–25 (LLILVSTILVNNFVLVQFLGL), 38–58 (AMGMSLATTFVLTLSSLCSYL), 65–85 (APLGMEFLKTITFILVIAVVV), 102–122 (VLGIFLPLITTNCAVLGVALL), 134–154 (ILYGFGAAVGFSLVLTLFSAM), and 171–191 (AIGMITAGLMSLAFLGFTGLV).

It belongs to the NqrDE/RnfAE family. The complex is composed of six subunits: RnfA, RnfB, RnfC, RnfD, RnfE and RnfG.

It is found in the cell inner membrane. Its function is as follows. Part of a membrane-bound complex that couples electron transfer with translocation of ions across the membrane. This Hahella chejuensis (strain KCTC 2396) protein is Ion-translocating oxidoreductase complex subunit A.